A 650-amino-acid polypeptide reads, in one-letter code: Probable ATP-dependent RNA helicase DDX17 (650 aa).

Residues 1–38 (MRGGGFGDRDRDRDRGGFGARGGSGLPPKKFGNPGERL) form a disordered region. Positions 7–16 (GDRDRDRDRG) are enriched in basic and acidic residues. An N6-acetyllysine mark is found at Lys29, Lys30, and Lys42. A Glycyl lysine isopeptide (Lys-Gly) (interchain with G-Cter in SUMO); alternate cross-link involves residue Lys50. A Glycyl lysine isopeptide (Lys-Gly) (interchain with G-Cter in SUMO1); alternate cross-link involves residue Lys50. Lys50 participates in a covalent cross-link: Glycyl lysine isopeptide (Lys-Gly) (interchain with G-Cter in SUMO2); alternate. The Q motif motif lies at 92–120 (FAFHHANFPQYVMDVLMDQHFTEPTPIQC). The region spanning 123–298 (FPLALSGRDM…EDFLRDYTQI (176 aa)) is the Helicase ATP-binding domain. ATP is bound at residue 136 to 143 (AQTGSGKT). A DEAD box motif is present at residues 246–249 (DEAD). The Helicase C-terminal domain occupies 326-473 (KLIQLMEEIM…AINPKLMQLV (148 aa)). At Thr444 the chain carries Phosphothreonine. Lys449 is covalently cross-linked (Glycyl lysine isopeptide (Lys-Gly) (interchain with G-Cter in SUMO2)). Positions 468 to 650 (KLMQLVDHRG…PPPPPPPSRK (183 aa)) are transactivation domain. 2 disordered regions span residues 472 to 543 (LVDH…YGSP) and 583 to 650 (ASST…PSRK). The segment covering 489-499 (RTTSSANNPNL) has biased composition (polar residues). Positions 504-531 (ECDRRLRGVKDGGRRDSTSYRDRSETDR) are enriched in basic and acidic residues. Positions 583–609 (ASSTASAGRSSQSSSQQFSGIGRSGQQ) are enriched in low complexity. An Omega-N-methylarginine modification is found at Arg605. Positions 610–619 (PQPLMSQQFA) are enriched in polar residues. Pro residues predominate over residues 638 to 650 (YPPPPPPPPPSRK). Positions 639–647 (PPPPPPPPP) are interaction with YAP1.

The protein belongs to the DEAD box helicase family. DDX5/DBP2 subfamily. As to quaternary structure, interacts with DDX5 in an RNA-independent manner. Interacts with CDK9 transcription elongation complex under basal conditions. Following cell stimulation with poly(I:C), a synthetic double-stranded RNA mimicking viral infection, the interaction with CDK9 is decreased. Interacts with ESR1 in an estrogen-independent manner. Interacts with HNRNPH1; this interaction is important for the regulation of alternative splicing on G-quadruplex structures. At high, but not low, cell density, interacts with DROSHA and DGCR8, the core components of the microprocessor complex involved in the maturation of primary microRNAs (pri-miRNAs) into pre-miRNAs. The interaction with DGCR8 is reduced during mitosis. At low, but not high, cell density, interacts with YAP1 and with its paralog, WWTR1/TAZ. Interactions with DROSHA and YAP1 are mutually exclusive. In vitro, the pre-miRNA processing activity of the DDX17-containing microprocessor complex is weaker than that of the DROSHA/DGCR8 microprocessor complex. Interacts with UPF3B. Interacts with NFAT5; this interaction leads to DDX17 recruitment to LNC2 and S100A4 promoters and NFAT5-mediated DDX17-enhanced transactivation. Interacts with HDAC1, HDAC2 and HDAC3; this interaction with HDAC1 and HDAC3, but not HDAC2, depends upon DDX17 acetylation. Interacts with ZC3HAV1 (via N-terminal domain) in an RNA-independent manner. Interacts with EXOSC3/RRP40 and EXOSC5/RRP46; this interaction may be indirect and mediated by ZC3HAV1-binding. Interacts with EP300; this interaction leads to acetylation at lysine residues. Interacts with CREBBP/CBP and KAT2B/P/CAF. Directly interacts with CTNNB1. Interacts with MYOD1. Interacts with TP53. Interacts with DCP1A in an RNA-independent manner. Interacts with DCP2 in an RNA-dependent manner. Interacts with DHX36; this interaction occurs in a RNA-dependent manner. Interacts with ERCC6. Sumoylation significantly increases stability. It also promotes interaction specifically with HDAC1 (but not HDAC2, nor HDAC3) and strongly stimulates ESR1 and TP53 coactivation. Post-translationally, acetylation at lysine residues stabilizes the protein, stimulates interaction with HDAC1 and HDAC3, but not HDAC2, and represses ESR1 and TP53 coactivation activity.

Its subcellular location is the nucleus. It localises to the nucleolus. It is found in the cytoplasm. The protein resides in the cytosol. The catalysed reaction is ATP + H2O = ADP + phosphate + H(+). Its function is as follows. As an RNA helicase, unwinds RNA and alters RNA structures through ATP binding and hydrolysis. Involved in multiple cellular processes, including pre-mRNA splicing, alternative splicing, ribosomal RNA processing and miRNA processing, as well as transcription regulation. Regulates the alternative splicing of exons exhibiting specific features. This function requires the RNA helicase activity. Affects NFAT5 and histone macro-H2A.1/MACROH2A1 alternative splicing in a CDK9-dependent manner. Affects splicing of mediators of steroid hormone signaling pathway, including kinases that phosphorylates ESR1 and transcriptional regulators. By acting splicing of regulatory factors, participates in ESR1 and AR stabilization. Promotes the inclusion of specific AC-rich alternative exons in CD44 transcripts. In myoblasts and epithelial cells, cooperates with HNRNPH1 to control the splicing of specific subsets of exons. In addition to binding mature mRNAs, also interacts with certain pri-microRNAs, including MIR132/miR-132, and stabilizes the primary transcript. Also participates in the MIR132 processing, resulting in significantly higher levels of mature MIR132 than MIR212 despite the fact that both are cotranscribed and co-regulated. Binding of pri-microRNAs may occur on the 3' segment flanking the stem loop via the 5'-[ACG]CAUC[ACU]-3' consensus sequence. Participates in MYC down-regulation at high cell density through the production of MYC-targeting microRNAs. Along with DDX5, may be involved in the processing of the 32S intermediate into the mature 28S rRNA. Promoter-specific transcription regulator, functioning as a coactivator or corepressor depending on the context of the promoter and the transcriptional complex in which it exists. Enhances NFAT5 transcriptional activity. Synergizes with TP53 in the activation of the MDM2 promoter; this activity requires acetylation on lysine residues. May also coactivate MDM2 transcription through a TP53-independent pathway. Coactivates MMP7 transcription. Along with CTNNB1, coactivates MYC, JUN, FOSL1 and cyclin D1/CCND1 transcription. Alone or in combination with DDX5 and/or SRA1 non-coding RNA, plays a critical role in promoting the assembly of proteins required for the formation of the transcription initiation complex and chromatin remodeling leading to coactivation of MYOD1-dependent transcription. This helicase-independent activity is required for skeletal muscle cells to properly differentiate into myotubes. During epithelial-to-mesenchymal transition, coregulates SMAD-dependent transcriptional activity, directly controlling key effectors of differentiation, including miRNAs which in turn directly repress its expression. Plays a role in estrogen and testosterone signaling pathway at several levels. Mediates the use of alternative promoters in estrogen-responsive genes and regulates transcription and splicing of a large number of steroid hormone target genes. Contrary to the splicing regulation activity, transcriptional coregulation of the estrogen receptor ESR1 is helicase activity-independent. Plays a role in innate immunity. Specifically restricts bunyavirus infection, including Rift Valley fever virus (RVFV) or La Crosse virus (LACV), but not vesicular stomatitis virus (VSV), in an interferon- and DROSHA-independent manner. Binds to RVFV RNA, likely via structured viral RNA elements. Promotes mRNA degradation mediated by the antiviral zinc-finger protein ZC3HAV1, in an ATPase-dependent manner. This chain is Probable ATP-dependent RNA helicase DDX17 (Ddx17), found in Mus musculus (Mouse).